Reading from the N-terminus, the 290-residue chain is MLTPQRSSYTLQFVTKIGKDDLLAEALLCEKTNFTINSVYLGKMICMTVHAVTMTKFTPDKAERAAHYNPQEHIYETCPGDEFYDACEYSLVGGGKLSTSHGRLSPTKTTPHPKSAGVTPPQRVPARPATRAAAPSATPTQPDCVAKQRTSPGVNSIKSGKSLAFSCTPKTPKTPWYGATHLFNKNVFCAAVSRVAAAHASDAASALWDLDPPKTNEDLDRFLKAAAIRILVCEGSKLLEMANATMERSPDGAAAVAPIGYDRRPRLASRRRSIKCKPPADDFFDDTDSR.

Residues 98–112 (STSHGRLSPTKTTPH) show a composition bias toward polar residues. A disordered region spans residues 98 to 156 (STSHGRLSPTKTTPHPKSAGVTPPQRVPARPATRAAAPSATPTQPDCVAKQRTSPGVNS). Residues 118-142 (VTPPQRVPARPATRAAAPSATPTQP) are compositionally biased toward low complexity. The short motif at 146–149 (AKQR) is the Nuclear localization signal element. The Nuclear export signal motif lies at 219–231 (LDRFLKAAAIRIL).

It belongs to the alphaherpesvirinae VP22 tegument protein family. In terms of assembly, interacts with gE (via C-terminus); this interaction is necessary for the recruitment of VP22 to the Golgi and its packaging into virions. Interacts with gM (via C-terminus). Interacts with VP16; this interaction allows the formation of a tripartite complex composed of VP16, VP22 and UL41/VHS. Interacts with the capsid-binding protein UL16. Interacts with host CGAS. Highly phosphorylated in the host cell. Packaging is selective for underphosphorylated forms.

The protein localises to the virion tegument. Its subcellular location is the host cytoplasm. It localises to the host nucleus. The protein resides in the host Golgi apparatus. Its function is as follows. Tegument protein that plays different roles during the time course of infection. Participates in both the accumulation of viral mRNAs and viral protein translation at late time of infection. Modulates the RNase activity of the virion host shutoff protein UL41 probably to ensure necessary levels of key cellular mRNAs and proteins. Plays a role in microtubule reorganization that occurs after viral infection by stabilizing microtubule network. Plays a role in the inhibition of host innate immune system by targeting the CGAS enzymatic activity which is the principal cytosolic DNA sensor that detects invading viral DNA. Acts by mediating disruption of liquid-like droplets in which CGAS is activated, thereby preventing CGAS activity. In Equus caballus (Horse), this protein is Tegument protein VP22 (11).